We begin with the raw amino-acid sequence, 826 residues long: Ribonucleoside-diphosphate reductase large subunit (826 aa).

Substrate contacts are provided by residues threonine 171, 186 to 187 (SC), glycine 217, 387 to 391 (NLCAE), and 594 to 598 (PTSGC). Cysteines 187 and 403 form a disulfide. The active-site Proton acceptor is the asparagine 387. Catalysis depends on cysteine 389, which acts as the Cysteine radical intermediate. Residue glutamate 391 is the Proton acceptor of the active site.

Belongs to the ribonucleoside diphosphate reductase large chain family. In terms of assembly, heterotetramer composed of a homodimer of the large subunit (R1) and a homodimer of the small subunit (R2). Larger multisubunit protein complex are also active, composed of (R1)n(R2)n.

The enzyme catalyses a 2'-deoxyribonucleoside 5'-diphosphate + [thioredoxin]-disulfide + H2O = a ribonucleoside 5'-diphosphate + [thioredoxin]-dithiol. Ribonucleoside-diphosphate reductase holoenzyme provides the precursors necessary for viral DNA synthesis. Allows virus growth in non-dividing cells, as well as reactivation from latency in infected hosts. Catalyzes the biosynthesis of deoxyribonucleotides from the corresponding ribonucleotides. The chain is Ribonucleoside-diphosphate reductase large subunit from Epstein-Barr virus (strain GD1) (HHV-4).